A 426-amino-acid polypeptide reads, in one-letter code: DNA polymerase processivity factor component OPG148 (426 aa).

It belongs to the orthopoxvirus OPG148 family. Interacts with the DNA polymerase catalytic subunit OPG071. Interacts with UDG/OPG116. Component of the uracil-DNA glycosylase(UDG)-OPG148-polymerase complex; OPG148 and UDG form a heterodimeric processivity factor that associates with OPG071 to form the processive polymerase holoenzyme. Interacts with OPG117.

Plays an essential role in viral DNA replication by acting as the polymerase processivity factor together with protein OPG116. Serves as a bridge which links the DNA polymerase OPG071 and the uracil DNA glycosylase. The sequence is that of DNA polymerase processivity factor component OPG148 (OPG148) from Vaccinia virus (strain Copenhagen) (VACV).